Reading from the N-terminus, the 139-residue chain is Spermatogenesis-associated protein 33 (139 aa).

The interaction with ATG16L1 stretch occupies residues 1 to 67 (MVTHAAGART…TAKHPPPAAS (67 aa)). Residues 1–83 (MVTHAAGART…VKQKSSRKKV (83 aa)) are disordered. A compositionally biased stretch (basic and acidic residues) spans 25 to 50 (KSKEKLMEKHSQEARQADRESEKPVD). The interaction with VDAC2 stretch occupies residues 68 to 139 (LEEKPDVKQK…ADAYNSHLKE (72 aa)). Positions 86-91 (PQIIIT) match the PQIIIT motif. The residue at position 94 (serine 94) is a Phosphoserine. Over residues 97–109 (TLVSCSSSGSDQQ) the composition is skewed to polar residues. The disordered stretch occupies residues 97 to 139 (TLVSCSSSGSDQQRTIREPEDWGPYRRHRNPSTADAYNSHLKE). The segment covering 110–120 (RTIREPEDWGP) has biased composition (basic and acidic residues).

In terms of assembly, interacts (via PQIIIT motif) with PPP3R1, PPP3R2, PPP3CA, PPP3CB and PPP3CC. Interacts with VDAC2. Interacts with ATG16L1 (via WD repeats).

It is found in the cytoplasm. The protein localises to the cytosol. The protein resides in the nucleus. It localises to the mitochondrion. Its function is as follows. Plays an important role in sperm motility and male fertility. Required for sperm midpiece flexibility and for the localization of sperm calcineurin to the mitochondria. Promotes mitophagy as well as acts as an autophagy mediator in male germline cells. Links damaged mitochondria to autophagosomes via its binding to the outer mitochondrial membrane protein VDAC2, as well as to key autophagy machinery component ATG16L1. In Homo sapiens (Human), this protein is Spermatogenesis-associated protein 33 (SPATA33).